We begin with the raw amino-acid sequence, 58 residues long: Photosystem II reaction center protein K (58 aa).

The propeptide occupies 1–21 (MTVSYSIYLENSLHFGDALLA). A helical transmembrane segment spans residues 29–49 (IFDPIVDVMPVIPVFFLLLAF).

Belongs to the PsbK family. PSII is composed of 1 copy each of membrane proteins PsbA, PsbB, PsbC, PsbD, PsbE, PsbF, PsbH, PsbI, PsbJ, PsbK, PsbL, PsbM, PsbT, PsbX, PsbY, PsbZ, Psb30/Ycf12, at least 3 peripheral proteins of the oxygen-evolving complex and a large number of cofactors. It forms dimeric complexes.

The protein resides in the plastid. Its subcellular location is the chloroplast thylakoid membrane. One of the components of the core complex of photosystem II (PSII). PSII is a light-driven water:plastoquinone oxidoreductase that uses light energy to abstract electrons from H(2)O, generating O(2) and a proton gradient subsequently used for ATP formation. It consists of a core antenna complex that captures photons, and an electron transfer chain that converts photonic excitation into a charge separation. The sequence is that of Photosystem II reaction center protein K from Adiantum capillus-veneris (Maidenhair fern).